We begin with the raw amino-acid sequence, 254 residues long: PF03932 family protein CutC (254 aa).

It belongs to the CutC family.

The protein localises to the cytoplasm. The protein is PF03932 family protein CutC of Yersinia enterocolitica serotype O:8 / biotype 1B (strain NCTC 13174 / 8081).